The chain runs to 360 residues: Thioredoxin domain-containing protein 15 (360 aa).

Positions 1–32 (MVPAAGRRPPRVMRLLGWWQVLLWVLGLPVRG) are cleaved as a signal peptide. Residues 33-321 (VEVAEESGRL…GPLPSTLIKS (289 aa)) are Extracellular-facing. Residues 141-173 (PDREEEYYTEPEVAESDAAPTEDSNNTESLKSP) are disordered. Positions 143–155 (REEEYYTEPEVAE) are enriched in acidic residues. Residues 153–296 (VAESDAAPTE…LKIFIFNQTG (144 aa)) enclose the Thioredoxin domain. Residues asparagine 187, asparagine 194, asparagine 206, and asparagine 293 are each glycosylated (N-linked (GlcNAc...) asparagine). A helical membrane pass occupies residues 322-342 (VDWLLVFSLFFLISFIMYATI). At 343–360 (RTESIRWLIPGQEQEHVE) the chain is on the cytoplasmic side.

Its subcellular location is the cell projection. The protein resides in the cilium membrane. In terms of biological role, acts as a positive regulator of ciliary hedgehog signaling. Involved in ciliogenesis. The chain is Thioredoxin domain-containing protein 15 (TXNDC15) from Homo sapiens (Human).